The following is a 177-amino-acid chain: Translation initiation factor IF-3 (177 aa).

It belongs to the IF-3 family. Monomer.

The protein resides in the cytoplasm. IF-3 binds to the 30S ribosomal subunit and shifts the equilibrium between 70S ribosomes and their 50S and 30S subunits in favor of the free subunits, thus enhancing the availability of 30S subunits on which protein synthesis initiation begins. The polypeptide is Translation initiation factor IF-3 (Nitratiruptor sp. (strain SB155-2)).